A 471-amino-acid chain; its full sequence is UDP-N-acetylmuramate--L-alanine ligase (471 aa).

114 to 120 (GTHGKTT) contributes to the ATP binding site.

It belongs to the MurCDEF family.

The protein localises to the cytoplasm. The enzyme catalyses UDP-N-acetyl-alpha-D-muramate + L-alanine + ATP = UDP-N-acetyl-alpha-D-muramoyl-L-alanine + ADP + phosphate + H(+). The protein operates within cell wall biogenesis; peptidoglycan biosynthesis. Functionally, cell wall formation. In Methylobacterium nodulans (strain LMG 21967 / CNCM I-2342 / ORS 2060), this protein is UDP-N-acetylmuramate--L-alanine ligase.